The following is a 314-amino-acid chain: MPDMKLFAGNATPELAQRIADRLYISLGDATVSRFSDGEVAVQINENVRGSDVFIIQSTCAPTNDNLMELVVMIDAMRRASAGRITAVIPYFGYARQDRRVRSARVPITAKVVADFLSNVGVDRVLTIDLHAEQIQGFFDVPVDNIFGTPVLLEDMHARGLEDPVVVSPDLGGVVRARATAKALGDIDIAIVDKRRPRANVSEVMNLIGDVEGRDCVIVDDMIDTGGTLCKAAEALKERGAKRVFAYATHAVFSGNAAKNIKNSVLDQVIVTDSITLSKEMAATGKVTQLTLSGMLAEAIRRISNEESISAMFN.

Residues 37 to 39 and 96 to 97 each bind ATP; these read DGE and RQ. The Mg(2+) site is built by histidine 131 and aspartate 170. The active site involves lysine 194. Residues arginine 196, aspartate 220, and 224-228 contribute to the D-ribose 5-phosphate site; that span reads DTGGT.

This sequence belongs to the ribose-phosphate pyrophosphokinase family. Class I subfamily. In terms of assembly, homohexamer. Requires Mg(2+) as cofactor.

The protein localises to the cytoplasm. The catalysed reaction is D-ribose 5-phosphate + ATP = 5-phospho-alpha-D-ribose 1-diphosphate + AMP + H(+). It functions in the pathway metabolic intermediate biosynthesis; 5-phospho-alpha-D-ribose 1-diphosphate biosynthesis; 5-phospho-alpha-D-ribose 1-diphosphate from D-ribose 5-phosphate (route I): step 1/1. Involved in the biosynthesis of the central metabolite phospho-alpha-D-ribosyl-1-pyrophosphate (PRPP) via the transfer of pyrophosphoryl group from ATP to 1-hydroxyl of ribose-5-phosphate (Rib-5-P). In Vibrio vulnificus (strain CMCP6), this protein is Ribose-phosphate pyrophosphokinase.